The primary structure comprises 480 residues: Gasdermin-C4 (480 aa).

A triggers pyroptosis region spans residues 1–226 (MGYSFDRASK…TCVILPSATK (226 aa)).

The protein belongs to the gasdermin family. Homooligomer; homooligomeric ring-shaped pore complex containing 27-28 subunits when inserted in the membrane. Post-translationally, cleavage by CASP8 relieves autoinhibition by releasing the N-terminal moiety (Gasdermin-C4, N-terminal) that initiates pyroptosis. Palmitoylated.

It is found in the cytoplasm. The protein localises to the cytosol. Its subcellular location is the cell membrane. Its activity is regulated as follows. The full-length protein before cleavage is inactive: intramolecular interactions between N- and C-terminal domains mediate autoinhibition in the absence of activation signal. The intrinsic pyroptosis-inducing activity is carried by the released N-terminal moiety (Gasdermin-C4, N-terminal) following cleavage by caspase CASP8. Its function is as follows. This form constitutes the precursor of the pore-forming protein: upon cleavage, the released N-terminal moiety (Gasdermin-C4, N-terminal) binds to membranes and forms pores, triggering pyroptosis. In terms of biological role, pore-forming protein that causes membrane permeabilization and pyroptosis. Produced by the cleavage of gasdermin-C4 by caspase CASP8 in response to death signals. After cleavage, moves to the plasma membrane where it strongly binds to membrane inner leaflet lipids. Homooligomerizes within the membrane and forms pores of 10-15 nanometers (nm) of inner diameter, triggering pyroptosis. The sequence is that of Gasdermin-C4 from Mus musculus (Mouse).